A 292-amino-acid polypeptide reads, in one-letter code: 4-diphosphocytidyl-2-C-methyl-D-erythritol kinase (292 aa).

K13 is an active-site residue. 97–107 (PVAAGLAGGSS) is a binding site for ATP. Residue D139 is part of the active site.

It belongs to the GHMP kinase family. IspE subfamily.

It carries out the reaction 4-CDP-2-C-methyl-D-erythritol + ATP = 4-CDP-2-C-methyl-D-erythritol 2-phosphate + ADP + H(+). The protein operates within isoprenoid biosynthesis; isopentenyl diphosphate biosynthesis via DXP pathway; isopentenyl diphosphate from 1-deoxy-D-xylulose 5-phosphate: step 3/6. Its function is as follows. Catalyzes the phosphorylation of the position 2 hydroxy group of 4-diphosphocytidyl-2C-methyl-D-erythritol. The chain is 4-diphosphocytidyl-2-C-methyl-D-erythritol kinase from Bacillus thuringiensis (strain Al Hakam).